A 366-amino-acid polypeptide reads, in one-letter code: Nodulation protein NolL (366 aa).

The next 9 helical transmembrane spans lie at 27–47 (FVKG…LVIY), 62–82 (IYMF…SGTI), 98–118 (LLIP…AAFF), 140–160 (FLWA…FNLL), 164–184 (ILCA…IVPL), 212–232 (HKSL…LDWG), 253–273 (VLLM…SLFH), 286–306 (LVAV…GAVF), and 324–344 (IVVA…VLWI).

This sequence belongs to the acyltransferase 3 family.

It is found in the cell membrane. In terms of biological role, thought to be an acetyltransferase that modifies the fucose of the nod factor. The chain is Nodulation protein NolL (nolL) from Sinorhizobium fredii (strain NBRC 101917 / NGR234).